Consider the following 357-residue polypeptide: Homoserine kinase (357 aa).

The protein belongs to the GHMP kinase family. Homoserine kinase subfamily. As to quaternary structure, homodimer.

It catalyses the reaction L-homoserine + ATP = O-phospho-L-homoserine + ADP + H(+). The protein operates within amino-acid biosynthesis; L-threonine biosynthesis; L-threonine from L-aspartate: step 4/5. Commits homoserine to the threonine biosynthesis pathway by catalyzing its O-phosphorylation. This chain is Homoserine kinase (THR1), found in Candida albicans (strain SC5314 / ATCC MYA-2876) (Yeast).